The chain runs to 194 residues: Glycerol-3-phosphate acyltransferase 2 (194 aa).

5 consecutive transmembrane segments (helical) span residues 1–21 (MWLL…AYVV), 64–84 (VLAV…LAAL), 112–132 (LAMA…VVIF), 135–155 (YISL…IYFH), and 156–173 (RPWP…LVIY).

This sequence belongs to the PlsY family. As to quaternary structure, probably interacts with PlsX.

It is found in the cell membrane. The enzyme catalyses an acyl phosphate + sn-glycerol 3-phosphate = a 1-acyl-sn-glycero-3-phosphate + phosphate. The protein operates within lipid metabolism; phospholipid metabolism. In terms of biological role, catalyzes the transfer of an acyl group from acyl-phosphate (acyl-PO(4)) to glycerol-3-phosphate (G3P) to form lysophosphatidic acid (LPA). This enzyme utilizes acyl-phosphate as fatty acyl donor, but not acyl-CoA or acyl-ACP. The polypeptide is Glycerol-3-phosphate acyltransferase 2 (Moorella thermoacetica (strain ATCC 39073 / JCM 9320)).